A 94-amino-acid chain; its full sequence is Small ubiquitin-related modifier 3 (94 aa).

Lys11 participates in a covalent cross-link: Glycyl lysine isopeptide (Lys-Gly) (interchain with G-Cter in SUMO). Positions 15 to 92 (DHINLKVAGQ…IDVFQQQTGG (78 aa)) constitute a Ubiquitin-like domain. Residue Gly92 forms a Glycyl lysine isopeptide (Gly-Lys) (interchain with K-? in acceptor proteins) linkage. Residues 93-94 (LC) constitute a propeptide that is removed on maturation.

This sequence belongs to the ubiquitin family. SUMO subfamily. As to quaternary structure, interacts with SAE2 and UBE2I. Covalently attached to a number of proteins. Post-translationally, polymeric chains can be formed through Lys-11 cross-linking. Cleavage of precursor form by a sentrin-specific protease is necessary for function.

It is found in the cytoplasm. Its subcellular location is the nucleus. It localises to the PML body. In terms of biological role, ubiquitin-like protein which can be covalently attached to target lysines either as a monomer or as a lysine-linked polymer. Does not seem to be involved in protein degradation and may function as an antagonist of ubiquitin in the degradation process. Plays a role in a number of cellular processes such as nuclear transport, DNA replication and repair, mitosis and signal transduction. Covalent attachment to its substrates requires prior activation by the E1 complex SAE1-SAE2 and linkage to the E2 enzyme UBE2I. The chain is Small ubiquitin-related modifier 3 from Gallus gallus (Chicken).